The following is an 809-amino-acid chain: LPS-assembly protein LptD (809 aa).

The signal sequence occupies residues 1–22 (MRRALRLLPLPLSIAICLPAMA).

Belongs to the LptD family. As to quaternary structure, component of the lipopolysaccharide transport and assembly complex. Interacts with LptE and LptA.

The protein localises to the cell outer membrane. Functionally, together with LptE, is involved in the assembly of lipopolysaccharide (LPS) at the surface of the outer membrane. This Xanthomonas euvesicatoria pv. vesicatoria (strain 85-10) (Xanthomonas campestris pv. vesicatoria) protein is LPS-assembly protein LptD.